The primary structure comprises 295 residues: Movement protein (295 aa).

The disordered stretch occupies residues 256–295 (KKTNVKEESPTSDPQSGEVSSMTQSVPGAADTRIPKPRRR). The segment covering 266-281 (TSDPQSGEVSSMTQSV) has biased composition (polar residues).

The protein belongs to the bromovirus movement protein family.

The protein localises to the host cell junction. It localises to the host plasmodesma. Its function is as follows. Transports viral genome to neighboring plant cells directly through plasmosdesmata, without any budding. The movement protein allows efficient cell to cell propagation, by bypassing the host cell wall barrier. Acts by forming a tubular structure at the host plasmodesmata, enlarging it enough to allow free passage of virion capsids. The chain is Movement protein from Broad bean mottle virus.